Here is a 1069-residue protein sequence, read N- to C-terminus: Calcium-transporting ATPase 10, plasma membrane-type (1069 aa).

A disordered region spans residues 1 to 29; it reads MSGQFNNSPRGEDKDVEAGTSSFTEYEDS. Position 2 is an N-acetylserine (S2). The Cytoplasmic segment spans residues 2 to 180; it reads SGQFNNSPRG…NTYPQKKGRS (179 aa). The tract at residues 42–53 is interaction with calmodulin; that stretch reads ERLRRWRQAALV. The helical transmembrane segment at 181 to 201 threads the bilayer; the sequence is FWRFVWEASQDLTLIILIVAA. The Lumenal portion of the chain corresponds to 202–219; sequence VASLALGIKTEGIEKGWY. Residues 220–240 form a helical membrane-spanning segment; sequence DGISIAFAVLLVIVVTATSDY. Over 241 to 369 the chain is Cytoplasmic; it reads RQSLQFQNLN…GGETPLQVRL (129 aa). The helical transmembrane segment at 370 to 389 threads the bilayer; the sequence is NGVATFIGIVGLTVAGVVLF. Topologically, residues 390 to 426 are lumenal; the sequence is VLVVRYFTGHTKNEQGGPQFIGGKTKFEHVLDDLVEI. The chain crosses the membrane as a helical span at residues 427–444; the sequence is FTVAVTIVVVAVPEGLPL. Residues 445–844 lie on the Cytoplasmic side of the membrane; it reads AVTLTLAYSM…RWGRSVYANI (400 aa). Residue D482 is the 4-aspartylphosphate intermediate of the active site. The Mg(2+) site is built by D789 and D793. The chain crosses the membrane as a helical span at residues 845–863; the sequence is QKFIQFQLTVNVAALVINV. Residues 864–874 are Lumenal-facing; sequence VAAISAGEVPL. The chain crosses the membrane as a helical span at residues 875-895; sequence TAVQLLWVNLIMDTLGALALA. Over 896 to 915 the chain is Cytoplasmic; it reads TEPPTDHLMDRAPVGRREPL. A helical membrane pass occupies residues 916–938; that stretch reads ITNIMWRNLFIQAMYQVTVLLIL. Over 939 to 951 the chain is Lumenal; it reads NFRGISILHLKSK. A helical membrane pass occupies residues 952 to 973; it reads PNAERVKNTVIFNAFVICQVFN. Topologically, residues 974-991 are cytoplasmic; that stretch reads EFNARKPDEINIFRGVLR. Residues 992 to 1013 traverse the membrane as a helical segment; the sequence is NHLFVGIISITIVLQVVIVEFL. The Lumenal portion of the chain corresponds to 1014-1023; that stretch reads GTFASTTKLD. The helical transmembrane segment at 1024–1045 threads the bilayer; the sequence is WEMWLVCIGIGSISWPLAVIGK. At 1046 to 1069 the chain is on the cytoplasmic side; the sequence is LIPVPETPVSQYFRINRWRRNSSG.

The protein belongs to the cation transport ATPase (P-type) (TC 3.A.3) family. Type IIB subfamily.

Its subcellular location is the membrane. It carries out the reaction Ca(2+)(in) + ATP + H2O = Ca(2+)(out) + ADP + phosphate + H(+). Its activity is regulated as follows. Activated by calmodulin. Functionally, this magnesium-dependent enzyme catalyzes the hydrolysis of ATP coupled with the translocation of calcium from the cytosol into the endoplasmic reticulum. This chain is Calcium-transporting ATPase 10, plasma membrane-type (ACA10), found in Arabidopsis thaliana (Mouse-ear cress).